We begin with the raw amino-acid sequence, 143 residues long: MKYWKYLSQLTIRRPLTYNNALLYRNRFPSILTWKRSATTQPDDTIFKDPVMDEQVQKLEEKMSSLVVNDPELAQKVGRLRQFFEKYGLEAGSKPSPLTILKITRDPEFKQLAETITEIFKKSGIQNDPAFLELVRRNLKKEK.

Residues 1–38 constitute a mitochondrion transit peptide; it reads MKYWKYLSQLTIRRPLTYNNALLYRNRFPSILTWKRSA.

The protein localises to the mitochondrion. This is an uncharacterized protein from Schizosaccharomyces pombe (strain 972 / ATCC 24843) (Fission yeast).